Consider the following 159-residue polypeptide: MNNFLISLALQESSTEVQGGLFDFNATLPLMALQFLALTIILNLIYYKPLGKILDERDEYIANSLTAASAALSKANDLTKRYEQDLAESRKKAQDIIKNAQQDAQNIVSSKIKEAQKDADQLMSNTYDQLNIQKEQALQNLEKQVDILSNQIQIKLLGN.

The helical transmembrane segment at 30-47 (LMALQFLALTIILNLIYY) threads the bilayer.

The protein belongs to the ATPase B chain family. As to quaternary structure, F-type ATPases have 2 components, F(1) - the catalytic core - and F(0) - the membrane proton channel. F(1) has five subunits: alpha(3), beta(3), gamma(1), delta(1), epsilon(1). F(0) has four main subunits: a(1), b(1), b'(1) and c(10-14). The alpha and beta chains form an alternating ring which encloses part of the gamma chain. F(1) is attached to F(0) by a central stalk formed by the gamma and epsilon chains, while a peripheral stalk is formed by the delta, b and b' chains.

The protein localises to the plastid. The protein resides in the chloroplast thylakoid membrane. In terms of biological role, f(1)F(0) ATP synthase produces ATP from ADP in the presence of a proton or sodium gradient. F-type ATPases consist of two structural domains, F(1) containing the extramembraneous catalytic core and F(0) containing the membrane proton channel, linked together by a central stalk and a peripheral stalk. During catalysis, ATP synthesis in the catalytic domain of F(1) is coupled via a rotary mechanism of the central stalk subunits to proton translocation. Its function is as follows. Component of the F(0) channel, it forms part of the peripheral stalk, linking F(1) to F(0). The b'-subunit is a diverged and duplicated form of b found in plants and photosynthetic bacteria. This Antithamnion sp. (Red alga) protein is ATP synthase subunit b', chloroplastic.